Consider the following 270-residue polypeptide: UPF0354 protein BCAH187_A4826 (270 aa).

The protein belongs to the UPF0354 family.

In Bacillus cereus (strain AH187), this protein is UPF0354 protein BCAH187_A4826.